Here is a 287-residue protein sequence, read N- to C-terminus: Nucleotide-binding protein Ppro_0977 (287 aa).

An ATP-binding site is contributed by 8–15; that stretch reads GMSGSGKS. 59–62 contributes to the GTP binding site; that stretch reads DIRG.

Belongs to the RapZ-like family.

Functionally, displays ATPase and GTPase activities. The protein is Nucleotide-binding protein Ppro_0977 of Pelobacter propionicus (strain DSM 2379 / NBRC 103807 / OttBd1).